A 226-amino-acid polypeptide reads, in one-letter code: MDIILASGSPRRRELLSRVQLEFTVISVDIDETPYQDESPEDYIVRMVAAKAEAATVQLNRQLKNNDAHIYQSLLSKPIILLTSDTIGVLPDGKTVLVKPNNREDAYRMWQQMSDSTHEVWTAVQATQLSLQPKRSDEFNNEQVWQIINQQQIIERTEVTFVALTLEMMSDYWDSGEPADKAGGYGIQGLGAAWVSRINGSYTNVVGLPLAQTLALIKEMNDTDTL.

Aspartate 85 acts as the Proton acceptor in catalysis.

The protein belongs to the Maf family. YhdE subfamily. The cofactor is a divalent metal cation.

It is found in the cytoplasm. It catalyses the reaction dTTP + H2O = dTMP + diphosphate + H(+). It carries out the reaction UTP + H2O = UMP + diphosphate + H(+). Functionally, nucleoside triphosphate pyrophosphatase that hydrolyzes dTTP and UTP. May have a dual role in cell division arrest and in preventing the incorporation of modified nucleotides into cellular nucleic acids. The sequence is that of dTTP/UTP pyrophosphatase from Psychrobacter cryohalolentis (strain ATCC BAA-1226 / DSM 17306 / VKM B-2378 / K5).